The chain runs to 90 residues: Mitochondrial import inner membrane translocase subunit Tim9 (90 aa).

The Twin CX3C motif motif lies at 24 to 48; sequence CFNSCVNEFGSRTVSGKEESCANNC. Disulfide bonds link Cys-24–Cys-48 and Cys-28–Cys-44.

It belongs to the small Tim family. In terms of assembly, heterohexamer; composed of 3 copies of tim-9/tin-9.1 and 3 copies of tim-10/tin-10, named soluble 70 kDa complex. The complex associates with the tim-22 component of the TIM22 complex. Interacts with multi-pass transmembrane proteins in transit.

It localises to the mitochondrion inner membrane. Its function is as follows. Mitochondrial intermembrane chaperone that participates in the import and insertion of multi-pass transmembrane proteins into the mitochondrial inner membrane. May also be required for the transfer of beta-barrel precursors from the TOM complex to the sorting and assembly machinery (SAM complex) of the outer membrane. Acts as a chaperone-like protein that protects the hydrophobic precursors from aggregation and guide them through the mitochondrial intermembrane space. The polypeptide is Mitochondrial import inner membrane translocase subunit Tim9 (tin-9.1) (Caenorhabditis elegans).